The sequence spans 340 residues: Dihydroorotate dehydrogenase (quinone) (340 aa).

FMN is bound by residues 61–65 (AGLDK) and threonine 85. Lysine 65 lines the substrate pocket. Residue 110-114 (NRMGF) coordinates substrate. Asparagine 138 and asparagine 171 together coordinate FMN. Substrate is bound at residue asparagine 171. Serine 174 serves as the catalytic Nucleophile. Substrate is bound at residue asparagine 176. FMN contacts are provided by lysine 216 and threonine 244. 245 to 246 (NT) lines the substrate pocket. Residues glycine 267, glycine 296, and 317-318 (YS) contribute to the FMN site.

The protein belongs to the dihydroorotate dehydrogenase family. Type 2 subfamily. As to quaternary structure, monomer. FMN is required as a cofactor.

It localises to the cell membrane. It catalyses the reaction (S)-dihydroorotate + a quinone = orotate + a quinol. It functions in the pathway pyrimidine metabolism; UMP biosynthesis via de novo pathway; orotate from (S)-dihydroorotate (quinone route): step 1/1. In terms of biological role, catalyzes the conversion of dihydroorotate to orotate with quinone as electron acceptor. In Ectopseudomonas mendocina (strain ymp) (Pseudomonas mendocina), this protein is Dihydroorotate dehydrogenase (quinone).